The chain runs to 386 residues: MSVIKMTDLDLAGKRVFIRADLNVPVKDGKVTSDARIRATIPTLKLALEKGAKVMVTSHLGRPTEGEFKPEDSLQPVVDYLKNAGFNVRLEQDYLNGVDVKDGEIVVLENVRVNKGEKKNDPELGKKYAALCDVFVMDAFGTAHRAQASTYGVAEFAPIACAGPLLAAELDALGKALKEPARPMVAIVGGSKVSTKLEVLNSLSKIADQIIVGGGIANTFIAAAGHNVGKSLYEADLIPVAKELAANTDIPVPVDVRVGLEFSETATATEKAVNEVKDDESIFDIGDKSAEQLAEIIKNAKTVLWNGPVGVFEFPHFRKGTEIISHAIANSDAFSIAGGGDTLAAIDLFGIADKISYISTGGGAFLEFVEGKVLPAVEILEKRAKN.

Residues 21 to 23 (DLN), R36, 59 to 62 (HLGR), R112, and R145 contribute to the substrate site. Residues K196, E313, and 339–342 (GGDT) each bind ATP.

The protein belongs to the phosphoglycerate kinase family. Monomer.

The protein resides in the cytoplasm. It catalyses the reaction (2R)-3-phosphoglycerate + ATP = (2R)-3-phospho-glyceroyl phosphate + ADP. The protein operates within carbohydrate degradation; glycolysis; pyruvate from D-glyceraldehyde 3-phosphate: step 2/5. This chain is Phosphoglycerate kinase, found in Haemophilus influenzae (strain PittGG).